A 477-amino-acid polypeptide reads, in one-letter code: Ribulose bisphosphate carboxylase large chain (477 aa).

A propeptide spanning residues 1 to 2 is cleaved from the precursor; it reads MS. Pro-3 is subject to N-acetylproline. Position 14 is an N6,N6,N6-trimethyllysine (Lys-14). Positions 123 and 173 each coordinate substrate. The Proton acceptor role is filled by Lys-175. Residue Lys-177 coordinates substrate. The Mg(2+) site is built by Lys-201, Asp-203, and Glu-204. Lys-201 carries the post-translational modification N6-carboxylysine. His-294 functions as the Proton acceptor in the catalytic mechanism. Substrate contacts are provided by Arg-295, His-327, and Ser-379.

The protein belongs to the RuBisCO large chain family. Type I subfamily. Heterohexadecamer of 8 large chains and 8 small chains; disulfide-linked. The disulfide link is formed within the large subunit homodimers. Mg(2+) is required as a cofactor. In terms of processing, the disulfide bond which can form in the large chain dimeric partners within the hexadecamer appears to be associated with oxidative stress and protein turnover.

It is found in the plastid. The catalysed reaction is 2 (2R)-3-phosphoglycerate + 2 H(+) = D-ribulose 1,5-bisphosphate + CO2 + H2O. It catalyses the reaction D-ribulose 1,5-bisphosphate + O2 = 2-phosphoglycolate + (2R)-3-phosphoglycerate + 2 H(+). RuBisCO catalyzes two reactions: the carboxylation of D-ribulose 1,5-bisphosphate, the primary event in carbon dioxide fixation, as well as the oxidative fragmentation of the pentose substrate in the photorespiration process. Both reactions occur simultaneously and in competition at the same active site. The protein is Ribulose bisphosphate carboxylase large chain (rbcL) of Lathraea clandestina (Purple toothwort).